Consider the following 745-residue polypeptide: AMP deaminase 1 (745 aa).

Residue T79 is modified to Phosphothreonine. S83 carries the phosphoserine modification. Position 214 is a phosphotyrosine (Y214). Residues H301 and H303 each contribute to the Zn(2+) site. Substrate-binding positions include H303 and 372–377 (KFNDKY). S439 is subject to Phosphoserine. Zn(2+) is bound at residue H570. E573 contacts substrate. H592 functions as the Proton acceptor in the catalytic mechanism. D647 is a binding site for Zn(2+). Substrate is bound at residue 648 to 651 (DPMQ).

The protein belongs to the metallo-dependent hydrolases superfamily. Adenosine and AMP deaminases family. Homotetramer. Requires Zn(2+) as cofactor.

The enzyme catalyses AMP + H2O + H(+) = IMP + NH4(+). It participates in purine metabolism; IMP biosynthesis via salvage pathway; IMP from AMP: step 1/1. Its function is as follows. AMP deaminase plays a critical role in energy metabolism. This is AMP deaminase 1 from Mus musculus (Mouse).